The primary structure comprises 743 residues: Merozoite surface protein 9 (743 aa).

An N-terminal signal peptide occupies residues 1–23 (MMNMKIVLFSLLLFVIRWNIISC). Residues 77–235 (KELLKEKQYT…VNDEDDVNDE (159 aa)) form an interaction with MSP1 and host SLC4A1/Band 3 region. Disordered regions lie at residues 202–282 (KSQG…ATAY), 459–487 (DNQA…PTED), 512–540 (NNTP…ENFD), and 666–743 (VDAL…EESK). The segment covering 211 to 224 (SQNQNENNDNQKYQ) has biased composition (polar residues). 8 tandem repeats follow at residues 226–231 (VNDEDD), 232–237 (VNDEED), 238–243 (TNDDED), 244–249 (TNDEED), 250–255 (TNDDED), 256–261 (TNDDED), 262–267 (TNDEED), and 268–273 (TNDEED). The tract at residues 226 to 273 (VNDEDDVNDEEDTNDDEDTNDEEDTNDDEDTNDDEDTNDEEDTNDEED) is 8 X 6 AA tandem repeats of [VT]-N-D-[ED]-[ED]-D. A compositionally biased stretch (acidic residues) spans 226–274 (VNDEDDVNDEEDTNDDEDTNDEEDTNDDEDTNDDEDTNDEEDTNDEEDH). The segment at 364–528 (LKDNLINYEF…PPTQSKKKNK (165 aa)) is interaction with MSP1 and host SLC4A1/Band 3. Basic and acidic residues predominate over residues 459 to 473 (DNQAVDTKSMEEPKV). Residues 512–521 (NNTPNVVPPT) show a composition bias toward low complexity. The stretch at 644–733 (NQETEEEMEK…QEEEEEEEIV (90 aa)) forms a coiled coil. Basic and acidic residues predominate over residues 672 to 721 (KNKEEEEKEKEKEEKEKEEKEKEKEEKEKEEKEKEEKEKEEKEEEKKEKE). Acidic residues predominate over residues 722 to 733 (EEQEEEEEEEIV).

The protein belongs to the plasmodium ABRA family. As to quaternary structure, forms a complex composed of MSP1, MSP6, MSP7, MSP9 and MSP3; within the complex, MSP6 and MSP9 mediate the binding to the host erythrocyte. Interacts with MSP1 subunits p19 and p42; the interaction is direct. Interacts with host SLC4A1/Band 3 protein (via the 5ABC region). MSP1 subunits p19 or p42, and MSP9 form a co-ligand complex that interacts with host SLC4A1/Band 3 protein. Not glycosylated.

It is found in the cell membrane. The protein localises to the parasitophorous vacuole lumen. Its subcellular location is the secreted. In terms of biological role, during the asexual blood stage, involved in the sialic acid-independent (SAID) merozoite invasion of host erythrocytes by binding to host SLC4A1/Band 3 protein on the surface of the host erythrocyte. This is Merozoite surface protein 9 from Plasmodium falciparum (isolate 3D7).